We begin with the raw amino-acid sequence, 75 residues long: uncharacterized protein (75 aa).

Transmembrane regions (helical) follow at residues 7-26 (LINAVFRIACGLTIMSAASA) and 36-58 (MHLFYIFMGAMKAGSGILRFCPV).

It localises to the cell membrane. This is an uncharacterized protein from Bacillus subtilis (strain 168).